The following is a 418-amino-acid chain: Pyruvate decarboxylase 1 (418 aa).

His59 provides a ligand contact to substrate. Residues 337 to 418 (DSWFNCQKLK…IFLINNGGYT (82 aa)) form a thiamine pyrophosphate binding region. Positions 387, 414, and 416 each coordinate Mg(2+).

The protein belongs to the TPP enzyme family. As to quaternary structure, homotetramer. Requires a metal cation as cofactor. The cofactor is thiamine diphosphate. Leaves.

It catalyses the reaction a 2-oxocarboxylate + H(+) = an aldehyde + CO2. This is Pyruvate decarboxylase 1 (PDC1) from Nicotiana tabacum (Common tobacco).